Reading from the N-terminus, the 199-residue chain is Recombination protein RecR (199 aa).

The segment at 57–72 adopts a C4-type zinc-finger fold; the sequence is CQQCRTFTEQNLCAIC. Residues 81–176 enclose the Toprim domain; that stretch reads GMICVVEMPV…KVSRIAHGVP (96 aa).

It belongs to the RecR family.

Functionally, may play a role in DNA repair. It seems to be involved in an RecBC-independent recombinational process of DNA repair. It may act with RecF and RecO. In Psychromonas ingrahamii (strain DSM 17664 / CCUG 51855 / 37), this protein is Recombination protein RecR.